The primary structure comprises 591 residues: Aspartate--tRNA ligase (591 aa).

Residue Glu-176 coordinates L-aspartate. Residues 200-203 (QILK) form an aspartate region. Arg-222 is a binding site for L-aspartate. Residues 222-224 (RDE) and Gln-231 contribute to the ATP site. His-450 is an L-aspartate binding site. Glu-484 contacts ATP. Position 491 (Arg-491) interacts with L-aspartate. Residue 536–539 (GLDR) coordinates ATP.

This sequence belongs to the class-II aminoacyl-tRNA synthetase family. Type 1 subfamily. In terms of assembly, homodimer.

Its subcellular location is the cytoplasm. The enzyme catalyses tRNA(Asp) + L-aspartate + ATP = L-aspartyl-tRNA(Asp) + AMP + diphosphate. In terms of biological role, catalyzes the attachment of L-aspartate to tRNA(Asp) in a two-step reaction: L-aspartate is first activated by ATP to form Asp-AMP and then transferred to the acceptor end of tRNA(Asp). This chain is Aspartate--tRNA ligase, found in Listeria welshimeri serovar 6b (strain ATCC 35897 / DSM 20650 / CCUG 15529 / CIP 8149 / NCTC 11857 / SLCC 5334 / V8).